The chain runs to 205 residues: Homeobox protein goosecoid-2 (205 aa).

Disordered stretches follow at residues 33 to 58 (SLPARAACPPQPAGRQSPAKPEEPGA) and 185 to 205 (KRASASARLLPGVKKSPKGSC). A DNA-binding region (homeobox) is located at residues 126–185 (TRRHRTIFSEEQLQALEALFVQNQYPDVSTRERLAGRIRLREERVEVWFKNRRAKWRHQK).

The protein belongs to the paired homeobox family. Bicoid subfamily. Detected in adult testis and pituitary, and in 9-10 week fetal tissue (thorax). Probably expressed in other tissues at low levels.

It is found in the nucleus. In terms of biological role, may have a role in development. May regulate its own transcription. May bind the bicoid consensus sequence TAATCC. The sequence is that of Homeobox protein goosecoid-2 (GSC2) from Homo sapiens (Human).